The sequence spans 221 residues: MQIYQPHPWPLTVEEAITIQEELRHQVITQDQFTQPVQYVAGVDMGFEADGTISRAAVAVLSFPDLQVVETSLAYRPTSFPYIPGFLSFREIPAVLDALEKIQTKPDIILCDGQGIAHPRRLGIASHLGVLLNIPTIGVAKSLLIGRHEELADTKGSWQPLIHRGEIIGAVLRTRVGVKPVYVSSGHKISLPTAIDYVLRCTPKYRLPETTRVADKLASNR.

Residues D44 and D112 each coordinate Mg(2+).

The protein belongs to the endonuclease V family. Mg(2+) is required as a cofactor.

Its subcellular location is the cytoplasm. The catalysed reaction is Endonucleolytic cleavage at apurinic or apyrimidinic sites to products with a 5'-phosphate.. Functionally, DNA repair enzyme involved in the repair of deaminated bases. Selectively cleaves double-stranded DNA at the second phosphodiester bond 3' to a deoxyinosine leaving behind the intact lesion on the nicked DNA. In Trichormus variabilis (strain ATCC 29413 / PCC 7937) (Anabaena variabilis), this protein is Endonuclease V.